The primary structure comprises 496 residues: PE-PGRS family protein PE_PGRS1 (496 aa).

Positions 4 to 94 (LITSPATVAA…VCYAAAETAN (91 aa)) constitute a PE domain. The disordered stretch occupies residues 461–480 (LIGNGGDGGPGMFGGPGGAG).

Belongs to the mycobacterial PE family. PGRS subfamily.

The protein localises to the secreted. It is found in the cell wall. The protein resides in the host mitochondrion. Its function is as follows. When expressed in host mitochondria, induces mitochondrial stress which results in mitochondrial membrane depolarization, up-regulation of mitochondrial superoxides and release of cytochrome-C in the cytoplasm. The cytochrome-C in cytoplasm triggers the activation of caspase-9, caspase-3 and caspase-7, leading to the apoptosis of host macrophages. Being a late expressing protein, apoptosis induction by PE_PGRS1 may facilitate the M.tuberculosis survival and silent expansion of its niche at the site of granuloma. In terms of biological role, when expressed in THP-1 macrophages, promotes the survival of mycobacteria within macrophages after a 24- to 48-hour infection by blocking endoplasmic reticulum stress and inhibiting host cell apoptosis. Can chelate excessive intracellular calcium in THP-1 macrophages, which reduces the concentration of intracellular free Ca(2+) and blocks the PERK-eIF2alpha-ATF4 axis, thereby inhibiting the endoplasmic reticulum stress caused by infection. It also reduces the apoptosis of THP-1 macrophages by decreasing the activation of caspase-3 and caspase-9. This is PE-PGRS family protein PE_PGRS1 from Mycobacterium tuberculosis (strain ATCC 25618 / H37Rv).